Consider the following 102-residue polypeptide: Large ribosomal subunit protein uL23 (102 aa).

The protein belongs to the universal ribosomal protein uL23 family. Part of the 50S ribosomal subunit. Contacts protein L29, and trigger factor when it is bound to the ribosome.

Functionally, one of the early assembly proteins it binds 23S rRNA. One of the proteins that surrounds the polypeptide exit tunnel on the outside of the ribosome. Forms the main docking site for trigger factor binding to the ribosome. In Paramagnetospirillum magneticum (strain ATCC 700264 / AMB-1) (Magnetospirillum magneticum), this protein is Large ribosomal subunit protein uL23.